We begin with the raw amino-acid sequence, 287 residues long: Lycopene elongase/hydratase (287 aa).

7 helical membrane-spanning segments follow: residues Ile-15 to Ile-35, Trp-37 to Ile-57, Ile-97 to Ile-117, Phe-137 to Ile-157, Met-166 to Val-186, Leu-218 to Ile-238, and Val-265 to His-285.

This sequence belongs to the UbiA prenyltransferase family.

It localises to the cell membrane. It carries out the reaction all-trans-lycopene + dimethylallyl diphosphate + A + H2O = nonaflavuxanthin + AH2 + diphosphate. It catalyses the reaction nonaflavuxanthin + dimethylallyl diphosphate + A + H2O = flavuxanthin + AH2 + diphosphate. It functions in the pathway carotenoid biosynthesis. Functionally, catalyzes the elongation of the C(40) carotenoid all-trans-lycopene to the acyclic C(50) carotenoid flavuxanthin during decaprenoxanthin biosynthesis. Acts as a bifunctional enzyme that catalyzes the elongation of lycopene by attaching a C(5) isoprene unit at C-2, as well as the hydroxylation of the new isoprene unit. The enzyme acts at both ends of the substrate, forming the C(50) carotenoid flavuxanthin via the C(45) intermediate nonaflavuxanthin. The sequence is that of Lycopene elongase/hydratase from Corynebacterium glutamicum (Brevibacterium saccharolyticum).